The following is a 140-amino-acid chain: Sex-regulated protein janus-B (140 aa).

R42 serves as a coordination point for substrate. H69 serves as the catalytic Proton acceptor. A substrate-binding site is contributed by 110-112; sequence SRT.

Belongs to the janus family.

Its function is as follows. JanA and janB regulate somatic sex differentiation. This is Sex-regulated protein janus-B (janB) from Drosophila erecta (Fruit fly).